The chain runs to 129 residues: Protein Turandot B2 (129 aa).

Positions 1–21 are cleaved as a signal peptide; sequence MNSATSLMCFALLLISPLCMG.

This sequence belongs to the Turandot family.

Its subcellular location is the secreted. A humoral factor that may play a role in stress tolerance. The polypeptide is Protein Turandot B2 (TotB2) (Drosophila erecta (Fruit fly)).